The following is a 415-amino-acid chain: Ankyrin repeat domain-containing protein 10 (415 aa).

ANK repeat units lie at residues 20-49 (SLRF…RAHL), 56-85 (YGWT…SLNV), 90-119 (YAQT…NINK), and 123-152 (EGET…HTDL). Positions 303-325 (TGSNGVSNGQPLSSGQASVSANG) are enriched in polar residues. The tract at residues 303–330 (TGSNGVSNGQPLSSGQASVSANGTEEPE) is disordered.

This Mus musculus (Mouse) protein is Ankyrin repeat domain-containing protein 10 (Ankrd10).